A 341-amino-acid chain; its full sequence is Endoglucanase 1 (341 aa).

The signal sequence occupies residues 1–16; sequence MKTATLLAALSVLAGA. Residues 17–30 constitute a propeptide that is removed on maturation; that stretch reads LAAPLAGDSALHRR. The active-site Proton donor is the Glu166. Catalysis depends on Glu275, which acts as the Nucleophile.

Belongs to the glycosyl hydrolase 5 (cellulase A) family.

The enzyme catalyses Endohydrolysis of (1-&gt;4)-beta-D-glucosidic linkages in cellulose, lichenin and cereal beta-D-glucans.. Has endoglucanase activity on carboxymethyl-cellulose (CMC). The polypeptide is Endoglucanase 1 (CMC1) (Saitozyma flava (Cryptococcus flavus)).